We begin with the raw amino-acid sequence, 784 residues long: Toll-like receptor 2 (784 aa).

An N-terminal signal peptide occupies residues 1 to 20 (MPRALWTAWVWAVIILSMEG). Residues 21-587 (ASHQASSLSC…ARLSLSECHR (567 aa)) are Extracellular-facing. An intrachain disulfide couples cysteine 30 to cysteine 36. LRR repeat units lie at residues 54 to 77 (VKSLDLSNNEITYVSNRDLQRCVN), 78 to 101 (LKTLRLGANEIHTVEEDSFFHLRN), 102 to 125 (LEYLDLSYNRLSNLSSSWFRSLYA), 126 to 150 (LKFLNLLGNVYKTLGETSLFSHLPN), 151 to 175 (LRTLKVGNSNSFTEIHEKDFTGLIF), 176 to 199 (LEELEISAQNLQIYVPKSLKSIQN), 200 to 223 (ISHLILHLKQPVLLVDILVDIVSS), 224 to 250 (LDCLELRDTNLHTFHFSEASISEMNTS), 251 to 278 (VKKLIFRNVQFTDESFVEVVKLFNYVSG), 279 to 308 (ILEVEFDDCTHDGIGDFRALSLDRIRHLGN), 309 to 337 (VETLTIRKLHIPQFFLFHDLSSIYPLTGK), 338 to 361 (VKRVTIESSKVFLVPCLLSQHLKS), 362 to 388 (LEYLDLSENLMSEETLKNSACKDAWPF), 389 to 414 (LQTLVLRQNRLKSLEKTGELLLTLEN), 415 to 437 (LNNLDISKNNFLSMPETCRWPGK), 438 to 457 (MKQLNLSSTRVHSLTQCLPQ), 458 to 478 (TLEILDVSNNNLDSFSLILPQ), 479 to 500 (LKELYISRNKLKTLPDASFLPV), and 501 to 524 (LSVMRISRNIINTFSKEQLDSFQQ). A glycan (N-linked (GlcNAc...) asparagine) is linked at asparagine 114. N-linked (GlcNAc...) asparagine glycosylation is present at asparagine 199. N-linked (GlcNAc...) asparagine glycosylation is present at asparagine 248. Cysteine 353 and cysteine 382 are disulfide-bonded. A disulfide bridge links cysteine 432 with cysteine 454. Asparagine 442 carries N-linked (GlcNAc...) asparagine glycosylation. One can recognise an LRRCT domain in the interval 525–579 (LKTLEAGGNNFICSCDFLSFTQGQQALGRVLVDWPAEYRCDSPSHVRGQRVQDAR). The helical transmembrane segment at 588 to 608 (AAVVSAACCALFLLLLLTGVL) threads the bilayer. The Cytoplasmic portion of the chain corresponds to 609–784 (CHRFHGLWYM…WLNLRAAIRS (176 aa)). Residues 639–782 (ICYDAFVSYS…GFWLNLRAAI (144 aa)) enclose the TIR domain. Lysine 754 is covalently cross-linked (Glycyl lysine isopeptide (Lys-Gly) (interchain with G-Cter in ubiquitin)). The short motif at 761 to 778 (YLEWPVDETQQEGFWLNL) is the ATG16L1-binding motif element.

It belongs to the Toll-like receptor family. Interacts with LY96, TLR1 and TLR6 (via extracellular domain). TLR2 seems to exist in heterodimers with either TLR1 or TLR6 before stimulation by the ligand. The heterodimers form bigger oligomers in response to their corresponding ligands as well as further heterotypic associations with other receptors such as CD14 and/or CD36. Binds MYD88 (via TIR domain). Interacts with TICAM1. Interacts with CNPY3. Interacts with ATG16L1. Interacts with PPP1R11. Interacts with TICAM2. Interacts with TIRAP. In terms of processing, ubiquitinated at Lys-754 by PPP1R11, leading to its degradation. Deubiquitinated by USP2. Glycosylation of Asn-442 is critical for secretion of the N-terminal ectodomain of TLR2.

The protein resides in the membrane. Its subcellular location is the cytoplasmic vesicle. It is found in the phagosome membrane. The protein localises to the membrane raft. In terms of biological role, cooperates with LY96 to mediate the innate immune response to bacterial lipoproteins and other microbial cell wall components. Cooperates with TLR1 or TLR6 to mediate the innate immune response to bacterial lipoproteins or lipopeptides. Acts via MYD88 and TRAF6, leading to NF-kappa-B activation, cytokine secretion and the inflammatory response. May also promote apoptosis in response to lipoproteins. Forms activation clusters composed of several receptors depending on the ligand, these clusters trigger signaling from the cell surface and subsequently are targeted to the Golgi in a lipid-raft dependent pathway. Forms the cluster TLR2:TLR6:CD14:CD36 in response to diacylated lipopeptides and TLR2:TLR1:CD14 in response to triacylated lipopeptides. The polypeptide is Toll-like receptor 2 (TLR2) (Bubalus bubalis (Domestic water buffalo)).